The sequence spans 79 residues: UPF0291 protein SAV1341 (79 aa).

The segment at isoleucine 56–asparagine 79 is disordered. A compositionally biased stretch (basic and acidic residues) spans threonine 64–asparagine 79.

This sequence belongs to the UPF0291 family.

Its subcellular location is the cytoplasm. The sequence is that of UPF0291 protein SAV1341 from Staphylococcus aureus (strain Mu50 / ATCC 700699).